A 215-amino-acid polypeptide reads, in one-letter code: Thiamine import ATP-binding protein ThiQ (215 aa).

One can recognise an ABC transporter domain in the interval 2 to 215 (IYLNNVILND…GQISQLQKGV (214 aa)). 32-39 (GESGAGKS) is an ATP binding site.

Belongs to the ABC transporter superfamily. Thiamine importer (TC 3.A.1.19.1) family. As to quaternary structure, the complex is composed of two ATP-binding proteins (ThiQ), two transmembrane proteins (ThiP) and a solute-binding protein (ThiB).

The protein resides in the cell inner membrane. It carries out the reaction thiamine(out) + ATP + H2O = thiamine(in) + ADP + phosphate + H(+). Part of the ABC transporter complex ThiBPQ involved in thiamine import. Responsible for energy coupling to the transport system. The chain is Thiamine import ATP-binding protein ThiQ from Haemophilus influenzae (strain 86-028NP).